The chain runs to 603 residues: Glutamyl-tRNA(Gln) amidotransferase subunit B, mitochondrial (603 aa).

Disordered stretches follow at residues 38–61 (RGRDWSSTSRRAIDTQTSGASNGA) and 72–91 (EQAREGRAATRKGEVSPPEH). Positions 42-58 (WSSTSRRAIDTQTSGAS) are enriched in polar residues.

The protein belongs to the GatB/GatE family. GatB subfamily. Subunit of the heterotrimeric GatCAB amidotransferase (AdT) complex, composed of A, B and C subunits.

It is found in the mitochondrion. It carries out the reaction L-glutamyl-tRNA(Gln) + L-glutamine + ATP + H2O = L-glutaminyl-tRNA(Gln) + L-glutamate + ADP + phosphate + H(+). Allows the formation of correctly charged Gln-tRNA(Gln) through the transamidation of misacylated Glu-tRNA(Gln) in the mitochondria. The reaction takes place in the presence of glutamine and ATP through an activated gamma-phospho-Glu-tRNA(Gln). The chain is Glutamyl-tRNA(Gln) amidotransferase subunit B, mitochondrial from Paracoccidioides brasiliensis (strain Pb18).